We begin with the raw amino-acid sequence, 293 residues long: Ribosomal protein L11 methyltransferase (293 aa).

Positions 145, 166, 188, and 230 each coordinate S-adenosyl-L-methionine.

It belongs to the methyltransferase superfamily. PrmA family.

Its subcellular location is the cytoplasm. The enzyme catalyses L-lysyl-[protein] + 3 S-adenosyl-L-methionine = N(6),N(6),N(6)-trimethyl-L-lysyl-[protein] + 3 S-adenosyl-L-homocysteine + 3 H(+). Functionally, methylates ribosomal protein L11. This chain is Ribosomal protein L11 methyltransferase, found in Yersinia pseudotuberculosis serotype O:3 (strain YPIII).